A 209-amino-acid chain; its full sequence is Thiamine-phosphate synthase (209 aa).

Residues 36 to 40 (QYRDK) and asparagine 68 each bind 4-amino-2-methyl-5-(diphosphooxymethyl)pyrimidine. Mg(2+) is bound by residues aspartate 69 and aspartate 87. Threonine 106 is a 4-amino-2-methyl-5-(diphosphooxymethyl)pyrimidine binding site. 2-[(2R,5Z)-2-carboxy-4-methylthiazol-5(2H)-ylidene]ethyl phosphate is bound at residue 133-135 (SST). 4-amino-2-methyl-5-(diphosphooxymethyl)pyrimidine is bound at residue lysine 136. Glycine 163 contacts 2-[(2R,5Z)-2-carboxy-4-methylthiazol-5(2H)-ylidene]ethyl phosphate.

Belongs to the thiamine-phosphate synthase family. The cofactor is Mg(2+).

It carries out the reaction 2-[(2R,5Z)-2-carboxy-4-methylthiazol-5(2H)-ylidene]ethyl phosphate + 4-amino-2-methyl-5-(diphosphooxymethyl)pyrimidine + 2 H(+) = thiamine phosphate + CO2 + diphosphate. It catalyses the reaction 2-(2-carboxy-4-methylthiazol-5-yl)ethyl phosphate + 4-amino-2-methyl-5-(diphosphooxymethyl)pyrimidine + 2 H(+) = thiamine phosphate + CO2 + diphosphate. The enzyme catalyses 4-methyl-5-(2-phosphooxyethyl)-thiazole + 4-amino-2-methyl-5-(diphosphooxymethyl)pyrimidine + H(+) = thiamine phosphate + diphosphate. It functions in the pathway cofactor biosynthesis; thiamine diphosphate biosynthesis; thiamine phosphate from 4-amino-2-methyl-5-diphosphomethylpyrimidine and 4-methyl-5-(2-phosphoethyl)-thiazole: step 1/1. Its function is as follows. Condenses 4-methyl-5-(beta-hydroxyethyl)thiazole monophosphate (THZ-P) and 2-methyl-4-amino-5-hydroxymethyl pyrimidine pyrophosphate (HMP-PP) to form thiamine monophosphate (TMP). In Pseudomonas aeruginosa (strain UCBPP-PA14), this protein is Thiamine-phosphate synthase.